Here is a 156-residue protein sequence, read N- to C-terminus: Ribosomal RNA large subunit methyltransferase H (156 aa).

S-adenosyl-L-methionine is bound by residues L73, G104, and 123–128 (LSALTL).

The protein belongs to the RNA methyltransferase RlmH family. Homodimer.

It localises to the cytoplasm. The enzyme catalyses pseudouridine(1915) in 23S rRNA + S-adenosyl-L-methionine = N(3)-methylpseudouridine(1915) in 23S rRNA + S-adenosyl-L-homocysteine + H(+). Specifically methylates the pseudouridine at position 1915 (m3Psi1915) in 23S rRNA. The chain is Ribosomal RNA large subunit methyltransferase H from Shewanella frigidimarina (strain NCIMB 400).